The sequence spans 200 residues: LHFPL tetraspan subfamily member 7 protein (200 aa).

A run of 4 helical transmembrane segments spans residues 5–27 (VWVA…PAWF), 68–88 (VSAV…IFLL), 113–133 (AATA…SPFI), and 150–170 (LGWG…LPII).

This sequence belongs to the TMEM211 family.

Its subcellular location is the membrane. This chain is LHFPL tetraspan subfamily member 7 protein, found in Homo sapiens (Human).